The chain runs to 1211 residues: DNA-directed RNA polymerase subunit beta' (1211 aa).

Residues Cys60, Cys62, Cys75, and Cys78 each contribute to the Zn(2+) site. Asp449, Asp451, and Asp453 together coordinate Mg(2+). Residues Cys818, Cys892, Cys899, and Cys902 each coordinate Zn(2+).

This sequence belongs to the RNA polymerase beta' chain family. As to quaternary structure, the RNAP catalytic core consists of 2 alpha, 1 beta, 1 beta' and 1 omega subunit. When a sigma factor is associated with the core the holoenzyme is formed, which can initiate transcription. Requires Mg(2+) as cofactor. It depends on Zn(2+) as a cofactor.

It carries out the reaction RNA(n) + a ribonucleoside 5'-triphosphate = RNA(n+1) + diphosphate. Functionally, DNA-dependent RNA polymerase catalyzes the transcription of DNA into RNA using the four ribonucleoside triphosphates as substrates. This is DNA-directed RNA polymerase subunit beta' from Limosilactobacillus reuteri (strain DSM 20016) (Lactobacillus reuteri).